Consider the following 313-residue polypeptide: Ribosomal RNA small subunit methyltransferase H (313 aa).

S-adenosyl-L-methionine contacts are provided by residues 34-36 (GGH), Asp53, Phe80, Asp101, and Gln108.

Belongs to the methyltransferase superfamily. RsmH family.

Its subcellular location is the cytoplasm. The enzyme catalyses cytidine(1402) in 16S rRNA + S-adenosyl-L-methionine = N(4)-methylcytidine(1402) in 16S rRNA + S-adenosyl-L-homocysteine + H(+). Specifically methylates the N4 position of cytidine in position 1402 (C1402) of 16S rRNA. This is Ribosomal RNA small subunit methyltransferase H from Lacticaseibacillus paracasei (strain ATCC 334 / BCRC 17002 / CCUG 31169 / CIP 107868 / KCTC 3260 / NRRL B-441) (Lactobacillus paracasei).